The chain runs to 375 residues: Chaperone protein DnaJ (375 aa).

The region spanning 5–70 (DYYELLGISR…EKRAAYDQYG (66 aa)) is the J domain. A CR-type zinc finger spans residues 132–210 (GTTKDIKIHT…CHGDGRVNKA (79 aa)). Zn(2+) is bound by residues C145, C148, C162, C165, C184, C187, C198, and C201. CXXCXGXG motif repeat units lie at residues 145 to 152 (CDTCHGTG), 162 to 169 (CPHCHGAG), 184 to 191 (CHFCHGTG), and 198 to 205 (CKTCHGDG).

It belongs to the DnaJ family. As to quaternary structure, homodimer. The cofactor is Zn(2+).

Its subcellular location is the cytoplasm. In terms of biological role, participates actively in the response to hyperosmotic and heat shock by preventing the aggregation of stress-denatured proteins and by disaggregating proteins, also in an autonomous, DnaK-independent fashion. Unfolded proteins bind initially to DnaJ; upon interaction with the DnaJ-bound protein, DnaK hydrolyzes its bound ATP, resulting in the formation of a stable complex. GrpE releases ADP from DnaK; ATP binding to DnaK triggers the release of the substrate protein, thus completing the reaction cycle. Several rounds of ATP-dependent interactions between DnaJ, DnaK and GrpE are required for fully efficient folding. Also involved, together with DnaK and GrpE, in the DNA replication of plasmids through activation of initiation proteins. This chain is Chaperone protein DnaJ, found in Aggregatibacter actinomycetemcomitans (Actinobacillus actinomycetemcomitans).